The sequence spans 93 residues: Alpha-elapitoxin-Oh2a (93 aa).

Positions 1-21 (MKTLLLTLVVVTIVCLDLGYT) are cleaved as a signal peptide. 5 disulfides stabilise this stretch: Cys24–Cys43, Cys36–Cys64, Cys49–Cys53, Cys68–Cys79, and Cys80–Cys85.

This sequence belongs to the three-finger toxin family. Long-chain subfamily. Type II alpha-neurotoxin sub-subfamily. In terms of tissue distribution, expressed by the venom gland.

Its subcellular location is the secreted. Functionally, binds with high affinity to muscular (alpha-1/CHRNA1) and neuronal (alpha-7/CHRNA7) nicotinic acetylcholine receptor (nAChR) and inhibits acetylcholine from binding to the receptor, thereby impairing neuromuscular and neuronal transmission. The sequence is that of Alpha-elapitoxin-Oh2a from Ophiophagus hannah (King cobra).